Reading from the N-terminus, the 149-residue chain is Early lymphoid activation gene protein (149 aa).

Expressed in heart, kidney, lung, and skeletal muscle, with lower levels in pancreas and liver.

Its function is as follows. May function as an early signal that helps mediate the activation of T-cells. This chain is Early lymphoid activation gene protein (DIAPH2-AS1), found in Homo sapiens (Human).